Here is a 101-residue protein sequence, read N- to C-terminus: uncharacterized protein (101 aa).

This is an uncharacterized protein from Cupriavidus necator (strain ATCC 17699 / DSM 428 / KCTC 22496 / NCIMB 10442 / H16 / Stanier 337) (Ralstonia eutropha).